Reading from the N-terminus, the 144-residue chain is Putative pre-16S rRNA nuclease (144 aa).

This sequence belongs to the YqgF nuclease family.

It is found in the cytoplasm. Could be a nuclease involved in processing of the 5'-end of pre-16S rRNA. The chain is Putative pre-16S rRNA nuclease from Symbiobacterium thermophilum (strain DSM 24528 / JCM 14929 / IAM 14863 / T).